Consider the following 738-residue polypeptide: Outer membrane protein assembly factor BamA (738 aa).

Residues 1–13 form the signal peptide; the sequence is MVWLLFLSSFCFA. POTRA domains lie at 14–81, 82–159, 162–248, 251–329, and 332–404; these read DEVV…LQEN, PILR…VKEA, TVIR…LKEG, YSFG…VVST, and YRIR…VKER.

This sequence belongs to the BamA family. Part of the Bam complex.

It localises to the cell outer membrane. In terms of biological role, part of the outer membrane protein assembly complex, which is involved in assembly and insertion of beta-barrel proteins into the outer membrane. This Neorickettsia risticii (strain Illinois) protein is Outer membrane protein assembly factor BamA.